The primary structure comprises 228 residues: ATP-dependent dethiobiotin synthetase BioD (228 aa).

Position 12-17 (12-17 (EIGKTT)) interacts with ATP. Thr16 is a binding site for Mg(2+). Residue Lys37 is part of the active site. Position 41 (Ser41) interacts with substrate. ATP-binding positions include Asp54, 116 to 119 (EGAG), and 205 to 207 (PRL). 2 residues coordinate Mg(2+): Asp54 and Glu116.

It belongs to the dethiobiotin synthetase family. As to quaternary structure, homodimer. It depends on Mg(2+) as a cofactor.

Its subcellular location is the cytoplasm. It catalyses the reaction (7R,8S)-7,8-diammoniononanoate + CO2 + ATP = (4R,5S)-dethiobiotin + ADP + phosphate + 3 H(+). It participates in cofactor biosynthesis; biotin biosynthesis; biotin from 7,8-diaminononanoate: step 1/2. In terms of biological role, catalyzes a mechanistically unusual reaction, the ATP-dependent insertion of CO2 between the N7 and N8 nitrogen atoms of 7,8-diaminopelargonic acid (DAPA, also called 7,8-diammoniononanoate) to form a ureido ring. The sequence is that of ATP-dependent dethiobiotin synthetase BioD from Pseudomonas aeruginosa (strain ATCC 15692 / DSM 22644 / CIP 104116 / JCM 14847 / LMG 12228 / 1C / PRS 101 / PAO1).